A 381-amino-acid polypeptide reads, in one-letter code: GDP-mannose transporter (381 aa).

Topologically, residues 1 to 39 (MVESKKTDDYAIEMDKIDQGSKNFEAAAPPQPRSVPSSS) are cytoplasmic. A helical transmembrane segment spans residues 40–60 (LSGNPVLPVLAYCGSSILMTV). The Lumenal segment spans residues 61–68 (MNKYVLSG). The chain crosses the membrane as a helical span at residues 69–89 (LDFNLNFFLLCVQSIVCIIAI). At 90–109 (QTCKFCGLITYRDFSADEAK) the chain is on the cytoplasmic side. A helical transmembrane segment spans residues 110–126 (KWFPISLLLIGMIYTGS). The Lumenal portion of the chain corresponds to 127-133 (KALQFLS). Residues 134–150 (IPVYTIFKNLTIILIAY) traverse the membrane as a helical segment. Residues 151–159 (GEVLWFGGS) are Cytoplasmic-facing. The helical transmembrane segment at 160–181 (VTGLTLFSFGLMVLSSIIAAWA) threads the bilayer. The Lumenal portion of the chain corresponds to 182–199 (DIKHAVESSGDTSAQVST). Residues 200–220 (LNAGYIWMLINCLCTSSYVLG) traverse the membrane as a helical segment. Topologically, residues 221 to 232 (MRKRIKLTNFKD) are cytoplasmic. Residues 233-253 (FDTMFYNNLLSIPVLVVLTGL) form a helical membrane-spanning segment. Residues 254-273 (MEDWSSANIDRNFPQADRSS) are Lumenal-facing. The chain crosses the membrane as a helical span at residues 274 to 294 (IMFAMILSGLSSVFISYTSAW). At 295 to 302 (CVRVTSST) the chain is on the cytoplasmic side. Residues 303-323 (TYSMVGALNKLPIALSGLIFF) traverse the membrane as a helical segment. Residues 324–326 (DAP) are Lumenal-facing. A helical transmembrane segment spans residues 327–347 (VTFPSVSAIAVGFVSGIVYAI). Residues 348 to 381 (AKIKQNAKPKTGVLPTSNPLVSASSQSMRDSLRS) lie on the Cytoplasmic side of the membrane.

This sequence belongs to the TPT transporter family. SLC35D subfamily. Homooligomer.

The protein resides in the golgi apparatus membrane. Its subcellular location is the cytoplasmic vesicle membrane. It is found in the endoplasmic reticulum membrane. Its function is as follows. Involved in the import of GDP-mannose from the cytoplasm into the Golgi lumen. The polypeptide is GDP-mannose transporter (gmt1) (Aspergillus oryzae (strain ATCC 42149 / RIB 40) (Yellow koji mold)).